A 211-amino-acid chain; its full sequence is Transcription factor bHLH150 (211 aa).

Over residues 1–15 (MSSEQGNGSNPSTSP) the composition is skewed to polar residues. Residues 1–23 (MSSEQGNGSNPSTSPEVEGTKTI) form a disordered region. The 50-residue stretch at 135–184 (AIRGSGGSGRRRKLSAVGNRVRVLGGLVPGCRRTALPELLDETADYIAAL) folds into the bHLH domain.

In terms of assembly, homodimer. Interacts with PRE3 and ASK7. In terms of processing, phosphorylated by ASK7.

It localises to the nucleus. Functionally, atypical bHLH transcription factor probably unable to bind DNA. Negatively regulates brassinosteroid signaling. The protein is Transcription factor bHLH150 (BHLH150) of Arabidopsis thaliana (Mouse-ear cress).